Here is a 397-residue protein sequence, read N- to C-terminus: Acetate kinase (397 aa).

Asn8 contacts Mg(2+). ATP is bound at residue Lys15. A substrate-binding site is contributed by Arg92. Asp149 (proton donor/acceptor) is an active-site residue. Residues 209-213 (HLGNG), 283-285 (DFR), and 331-335 (GVGEN) each bind ATP. Residue Glu385 coordinates Mg(2+).

Belongs to the acetokinase family. Homodimer. Mg(2+) is required as a cofactor. The cofactor is Mn(2+).

The protein resides in the cytoplasm. It carries out the reaction acetate + ATP = acetyl phosphate + ADP. Its pathway is metabolic intermediate biosynthesis; acetyl-CoA biosynthesis; acetyl-CoA from acetate: step 1/2. In terms of biological role, catalyzes the formation of acetyl phosphate from acetate and ATP. Can also catalyze the reverse reaction. This Corynebacterium glutamicum (strain R) protein is Acetate kinase.